The chain runs to 267 residues: Type III pantothenate kinase (267 aa).

6–13 (DSGNSRLK) contacts ATP. Residues Y96 and 103-106 (GADR) each bind substrate. D105 acts as the Proton acceptor in catalysis. An ATP-binding site is contributed by T131. T181 is a binding site for substrate.

The protein belongs to the type III pantothenate kinase family. Homodimer. NH4(+) is required as a cofactor. It depends on K(+) as a cofactor.

The protein resides in the cytoplasm. The enzyme catalyses (R)-pantothenate + ATP = (R)-4'-phosphopantothenate + ADP + H(+). Its pathway is cofactor biosynthesis; coenzyme A biosynthesis; CoA from (R)-pantothenate: step 1/5. Its function is as follows. Catalyzes the phosphorylation of pantothenate (Pan), the first step in CoA biosynthesis. The sequence is that of Type III pantothenate kinase from Bordetella bronchiseptica (strain ATCC BAA-588 / NCTC 13252 / RB50) (Alcaligenes bronchisepticus).